Here is a 231-residue protein sequence, read N- to C-terminus: Ribose-5-phosphate isomerase A (231 aa).

Substrate-binding positions include 28–31 (TGST), 83–86 (DGAD), and 96–99 (KGGG). Residue glutamate 105 is the Proton acceptor of the active site. A substrate-binding site is contributed by lysine 123.

It belongs to the ribose 5-phosphate isomerase family. Homodimer.

It catalyses the reaction aldehydo-D-ribose 5-phosphate = D-ribulose 5-phosphate. Its pathway is carbohydrate degradation; pentose phosphate pathway; D-ribose 5-phosphate from D-ribulose 5-phosphate (non-oxidative stage): step 1/1. Its function is as follows. Catalyzes the reversible conversion of ribose-5-phosphate to ribulose 5-phosphate. This is Ribose-5-phosphate isomerase A from Sinorhizobium fredii (strain NBRC 101917 / NGR234).